The chain runs to 360 residues: Phospho-N-acetylmuramoyl-pentapeptide-transferase (360 aa).

Transmembrane regions (helical) follow at residues 25 to 45 (RGIL…PWMI), 73 to 93 (TMGG…WADL), 97 to 117 (YVWV…VDDY), 134 to 154 (YFWQ…TAPT), 168 to 188 (LAIP…VGSS), 199 to 219 (GLAI…CYLS), 236 to 256 (AGEL…FLWF), 263 to 283 (VFMG…IAVI), 288 to 308 (VVLF…VIQV), and 338 to 358 (VIVR…ATLK).

It belongs to the glycosyltransferase 4 family. MraY subfamily. The cofactor is Mg(2+).

The protein localises to the cell inner membrane. It catalyses the reaction UDP-N-acetyl-alpha-D-muramoyl-L-alanyl-gamma-D-glutamyl-meso-2,6-diaminopimeloyl-D-alanyl-D-alanine + di-trans,octa-cis-undecaprenyl phosphate = di-trans,octa-cis-undecaprenyl diphospho-N-acetyl-alpha-D-muramoyl-L-alanyl-D-glutamyl-meso-2,6-diaminopimeloyl-D-alanyl-D-alanine + UMP. It functions in the pathway cell wall biogenesis; peptidoglycan biosynthesis. Catalyzes the initial step of the lipid cycle reactions in the biosynthesis of the cell wall peptidoglycan: transfers peptidoglycan precursor phospho-MurNAc-pentapeptide from UDP-MurNAc-pentapeptide onto the lipid carrier undecaprenyl phosphate, yielding undecaprenyl-pyrophosphoryl-MurNAc-pentapeptide, known as lipid I. The sequence is that of Phospho-N-acetylmuramoyl-pentapeptide-transferase from Pseudomonas entomophila (strain L48).